We begin with the raw amino-acid sequence, 360 residues long: Phospho-N-acetylmuramoyl-pentapeptide-transferase (360 aa).

The next 10 helical transmembrane spans lie at 25-45, 73-93, 97-117, 142-162, 168-188, 199-219, 236-256, 263-283, 288-308, and 338-358; these read RGIL…PWMI, TMGG…WADL, YVWV…VDDY, VGAA…TLII, ASIP…VGSS, GLAI…CYLS, AGEL…FLWF, VFMG…IAVI, IVLF…VIQV, and VIVR…ATLK.

It belongs to the glycosyltransferase 4 family. MraY subfamily. The cofactor is Mg(2+).

It is found in the cell inner membrane. The catalysed reaction is UDP-N-acetyl-alpha-D-muramoyl-L-alanyl-gamma-D-glutamyl-meso-2,6-diaminopimeloyl-D-alanyl-D-alanine + di-trans,octa-cis-undecaprenyl phosphate = di-trans,octa-cis-undecaprenyl diphospho-N-acetyl-alpha-D-muramoyl-L-alanyl-D-glutamyl-meso-2,6-diaminopimeloyl-D-alanyl-D-alanine + UMP. It participates in cell wall biogenesis; peptidoglycan biosynthesis. Functionally, catalyzes the initial step of the lipid cycle reactions in the biosynthesis of the cell wall peptidoglycan: transfers peptidoglycan precursor phospho-MurNAc-pentapeptide from UDP-MurNAc-pentapeptide onto the lipid carrier undecaprenyl phosphate, yielding undecaprenyl-pyrophosphoryl-MurNAc-pentapeptide, known as lipid I. The chain is Phospho-N-acetylmuramoyl-pentapeptide-transferase from Pseudomonas fluorescens (strain SBW25).